The chain runs to 403 residues: Sulfate adenylyltransferase (403 aa).

It belongs to the sulfate adenylyltransferase family.

The enzyme catalyses sulfate + ATP + H(+) = adenosine 5'-phosphosulfate + diphosphate. It participates in sulfur metabolism; hydrogen sulfide biosynthesis; sulfite from sulfate: step 1/3. This Pelodictyon phaeoclathratiforme (strain DSM 5477 / BU-1) protein is Sulfate adenylyltransferase.